The sequence spans 120 residues: NAD(P)H-quinone oxidoreductase subunit 3, chloroplastic (120 aa).

3 consecutive transmembrane segments (helical) span residues 9 to 29 (IFWTFLIIASLIPILAFWISG), 64 to 84 (MFALVFVVFDVETVFLYPWAM), and 88 to 108 (VLGVSVFIEAFIFVLILVVGL).

This sequence belongs to the complex I subunit 3 family. In terms of assembly, NDH is composed of at least 16 different subunits, 5 of which are encoded in the nucleus.

It localises to the plastid. It is found in the chloroplast thylakoid membrane. The enzyme catalyses a plastoquinone + NADH + (n+1) H(+)(in) = a plastoquinol + NAD(+) + n H(+)(out). It carries out the reaction a plastoquinone + NADPH + (n+1) H(+)(in) = a plastoquinol + NADP(+) + n H(+)(out). Functionally, NDH shuttles electrons from NAD(P)H:plastoquinone, via FMN and iron-sulfur (Fe-S) centers, to quinones in the photosynthetic chain and possibly in a chloroplast respiratory chain. The immediate electron acceptor for the enzyme in this species is believed to be plastoquinone. Couples the redox reaction to proton translocation, and thus conserves the redox energy in a proton gradient. The polypeptide is NAD(P)H-quinone oxidoreductase subunit 3, chloroplastic (Lolium perenne (Perennial ryegrass)).